The chain runs to 370 residues: Aminomethyltransferase (370 aa).

The protein belongs to the GcvT family. In terms of assembly, the glycine cleavage system is composed of four proteins: P, T, L and H.

The catalysed reaction is N(6)-[(R)-S(8)-aminomethyldihydrolipoyl]-L-lysyl-[protein] + (6S)-5,6,7,8-tetrahydrofolate = N(6)-[(R)-dihydrolipoyl]-L-lysyl-[protein] + (6R)-5,10-methylene-5,6,7,8-tetrahydrofolate + NH4(+). Functionally, the glycine cleavage system catalyzes the degradation of glycine. The protein is Aminomethyltransferase of Clostridium botulinum (strain ATCC 19397 / Type A).